The primary structure comprises 101 residues: Large ribosomal subunit protein uL24 (101 aa).

The protein belongs to the universal ribosomal protein uL24 family. In terms of assembly, part of the 50S ribosomal subunit.

One of two assembly initiator proteins, it binds directly to the 5'-end of the 23S rRNA, where it nucleates assembly of the 50S subunit. Functionally, one of the proteins that surrounds the polypeptide exit tunnel on the outside of the subunit. The chain is Large ribosomal subunit protein uL24 from Streptococcus thermophilus (strain ATCC BAA-491 / LMD-9).